The following is a 385-amino-acid chain: 1-deoxy-D-xylulose 5-phosphate reductoisomerase (385 aa).

Residues Thr10, Gly11, Ser12, Ile13, Asn38, and Asn124 each contribute to the NADPH site. Lys125 serves as a coordination point for 1-deoxy-D-xylulose 5-phosphate. Glu126 contacts NADPH. Asp150 provides a ligand contact to Mn(2+). Positions 151, 152, 176, and 199 each coordinate 1-deoxy-D-xylulose 5-phosphate. Glu152 lines the Mn(2+) pocket. Residue Gly205 coordinates NADPH. 4 residues coordinate 1-deoxy-D-xylulose 5-phosphate: Ser212, Asn217, Lys218, and Glu221. Glu221 serves as a coordination point for Mn(2+).

It belongs to the DXR family. Requires Mg(2+) as cofactor. Mn(2+) serves as cofactor.

The enzyme catalyses 2-C-methyl-D-erythritol 4-phosphate + NADP(+) = 1-deoxy-D-xylulose 5-phosphate + NADPH + H(+). It functions in the pathway isoprenoid biosynthesis; isopentenyl diphosphate biosynthesis via DXP pathway; isopentenyl diphosphate from 1-deoxy-D-xylulose 5-phosphate: step 1/6. Catalyzes the NADPH-dependent rearrangement and reduction of 1-deoxy-D-xylulose-5-phosphate (DXP) to 2-C-methyl-D-erythritol 4-phosphate (MEP). The protein is 1-deoxy-D-xylulose 5-phosphate reductoisomerase of Clostridium acetobutylicum (strain ATCC 824 / DSM 792 / JCM 1419 / IAM 19013 / LMG 5710 / NBRC 13948 / NRRL B-527 / VKM B-1787 / 2291 / W).